The following is a 71-amino-acid chain: MPQVKVKEGEPFDVALRRFKRGCEKAGILSEVRRREQYEKPTQERKRKRAAAVKRHLKKLQREQLARKRLY.

It belongs to the bacterial ribosomal protein bS21 family.

The protein is Small ribosomal subunit protein bS21 of Alcanivorax borkumensis (strain ATCC 700651 / DSM 11573 / NCIMB 13689 / SK2).